The chain runs to 550 residues: MKSLKPGIGLMCIIALYYLLPLSFRSLWQPDETRYAEISREMLASGDWIVPHFLGLRYFEKPSVGYWINNLSQWAFGHTNFAVHFGSAFSIALTALMVYWLALRLWQDRWLGLTAAAIYSSCLLVYSIGTYAVLDPMIALWLAAAMCAFWQAVQAPRGWRKGLGYLALGIACGLGFMTKGFLALAVPVLSVLPWVIAQKRWKEVFIYGPLALLGAVATSLPWVIAIARREPDFWHYFIWVEHVQRFAEDNAQHKAPFWYYLPVLLAGTLPWLGLLPGALRRAWRERQTQSGAFYLLGWVVMPLLFFSLSKGKLPTYILPSFAPLALLMARYAATCGGRALKVNGVLNLLFGLLCVITVASVLAPWGLAQHPLFVQNEVRKVLLGVLGFLVWAAVGGLTLRAPTVCWRWAALCPLGIALLVGQAIPQQVIDAKQPQSFIQTVRPQLEKSRFIFANSVGVAAGLAWELQRSDISLFELQGELAYGLSYPDAADRFIREEDFSDWLRERCKEGSVALVVLLPDGETQISHLPRADETYRRGRLVLLAYHQRRP.

11 helical membrane-spanning segments follow: residues 4–24, 81–101, 110–132, 176–196, 204–224, 255–275, 288–308, 313–333, 348–368, 381–401, and 409–429; these read LKPG…PLSF, FAVH…VYWL, WLGL…GTYA, FMTK…PWVI, VFIY…PWVI, APFW…LGLL, TQSG…FFSL, LPTY…RYAA, LLFG…WGLA, VLLG…TLRA, and AALC…QQVI.

It belongs to the glycosyltransferase 83 family.

The protein resides in the cell inner membrane. The enzyme catalyses 4-amino-4-deoxy-alpha-L-arabinopyranosyl di-trans,octa-cis-undecaprenyl phosphate + lipid IVA = lipid IIA + di-trans,octa-cis-undecaprenyl phosphate.. It functions in the pathway lipopolysaccharide metabolism; 4-amino-4-deoxy-beta-L-arabinose-lipid A biosynthesis. Catalyzes the transfer of the L-Ara4N moiety of the glycolipid undecaprenyl phosphate-alpha-L-Ara4N to lipid A. The modified arabinose is attached to lipid A and is required for resistance to polymyxin and cationic antimicrobial peptides. The sequence is that of Undecaprenyl phosphate-alpha-4-amino-4-deoxy-L-arabinose arabinosyl transferase 2 from Sodalis glossinidius (strain morsitans).